Here is a 121-residue protein sequence, read N- to C-terminus: MARIAGVDIPREKRIVISLTYVYGIGTSTANKIVEEANVSADTRVKDLTDDELGRIREVVDGYKVEGDLRREQNLNIKRLMEISSYRGIRHRRGLPVRGQKTKNNARTRKGPVKTVANKKK.

The interval 91–121 is disordered; the sequence is HRRGLPVRGQKTKNNARTRKGPVKTVANKKK.

Belongs to the universal ribosomal protein uS13 family. As to quaternary structure, part of the 30S ribosomal subunit. Forms a loose heterodimer with protein S19. Forms two bridges to the 50S subunit in the 70S ribosome.

Functionally, located at the top of the head of the 30S subunit, it contacts several helices of the 16S rRNA. In the 70S ribosome it contacts the 23S rRNA (bridge B1a) and protein L5 of the 50S subunit (bridge B1b), connecting the 2 subunits; these bridges are implicated in subunit movement. Contacts the tRNAs in the A and P-sites. This is Small ribosomal subunit protein uS13 from Staphylococcus epidermidis (strain ATCC 35984 / DSM 28319 / BCRC 17069 / CCUG 31568 / BM 3577 / RP62A).